The sequence spans 334 residues: MPKRRDILAIVLIVLPWTLLITVWHQSTLAPLLAVHKDEGSDPRRETPPGADPREYCTSDRDIVEVVRTEYVYTRPPPWSDTLPTIHVVTPTYSRPVQKAELTRMANTLLHVPNLHWLVVEDAPRRTPLTARLLRDTGLNYTHLHVETPRNYKLRGDARDPRIPRGTMQRNLALRWLRETFPRNSSQPGVVYFADDDNTYSLELFEEMRSTRRVSVWPVAFVGGLRYEAPRVNGAGKVVGWKTVFDPHRPFAIDMAGFAVNLRLILQRSQAYFKLRGVKGGYQESSLLRELVTLNDLEPKAANCTKILVWHTRTEKPVLVNEGKKGFTDPSVEI.

At 1 to 6 the chain is on the cytoplasmic side; it reads MPKRRD. The interval 3-5 is essential for transport from endoplasmic reticulum to Golgi apparatus and interaction with SAR1A; the sequence is KRR. A helical; Signal-anchor for type II membrane protein transmembrane segment spans residues 7–27; that stretch reads ILAIVLIVLPWTLLITVWHQS. The Lumenal segment spans residues 28–334; the sequence is TLAPLLAVHK…KGFTDPSVEI (307 aa). Residues 37–56 are disordered; the sequence is KDEGSDPRRETPPGADPREY. Residue 91–93 coordinates UDP-alpha-D-glucuronate; sequence PTY. Threonine 103 and threonine 108 each carry phosphothreonine. Residue aspartate 122 participates in UDP-alpha-D-glucuronate binding. An N-linked (GlcNAc...) asparagine glycan is attached at asparagine 140. UDP-alpha-D-glucuronate contacts are provided by arginine 165 and arginine 170. N-linked (GlcNAc...) asparagine glycosylation is present at asparagine 184. 195–197 provides a ligand contact to UDP-alpha-D-glucuronate; sequence DDD. Residue aspartate 197 coordinates Mn(2+). The interaction with galactose moiety of substrate glycoprotein stretch occupies residues 245-254; sequence FDPHRPFAID. Glutamate 284 (proton donor/acceptor) is an active-site residue. Residue asparagine 303 is glycosylated (N-linked (GlcNAc...) asparagine). 311–313 lines the UDP-alpha-D-glucuronate pocket; it reads HTR.

It belongs to the glycosyltransferase 43 family. As to quaternary structure, homodimer. Interacts with SAR1A. Mn(2+) serves as cofactor. In terms of processing, the soluble form derives from the membrane form by proteolytic processing. As to expression, mainly expressed in the brain.

It localises to the golgi apparatus membrane. The protein resides in the secreted. Its subcellular location is the endoplasmic reticulum membrane. It catalyses the reaction 3-O-(beta-D-galactosyl-(1-&gt;3)-beta-D-galactosyl-(1-&gt;4)-beta-D-xylosyl)-L-seryl-[protein] + UDP-alpha-D-glucuronate = 3-O-(beta-D-GlcA-(1-&gt;3)-beta-D-Gal-(1-&gt;3)-beta-D-Gal-(1-&gt;4)-beta-D-Xyl)-L-seryl-[protein] + UDP + H(+). It participates in protein modification; protein glycosylation. Its function is as follows. Involved in the biosynthesis of L2/HNK-1 carbohydrate epitope on glycoproteins. Can also play a role in glycosaminoglycan biosynthesis. Substrates include asialo-orosomucoid (ASOR), asialo-fetuin, and asialo-neural cell adhesion molecule. Requires sphingomyelin for activity: stearoyl-sphingomyelin was the most effective, followed by palmitoyl-sphingomyelin and lignoceroyl-sphingomyelin. Activity was demonstrated only for sphingomyelin with a saturated fatty acid and not for that with an unsaturated fatty acid, regardless of the length of the acyl group. This is Galactosylgalactosylxylosylprotein 3-beta-glucuronosyltransferase 1 from Homo sapiens (Human).